A 216-amino-acid chain; its full sequence is Adenylate kinase (216 aa).

Position 10 to 15 (10 to 15 (GAGKGT)) interacts with ATP. The tract at residues 30–59 (STGDMFRAAMKAETEMGLQAKSFIDKGALV) is NMP. AMP is bound by residues Thr-31, Arg-36, 57 to 59 (ALV), 85 to 88 (GFPR), and Gln-92. Residues 126–163 (GRRICKECGATYHLEFNPPAKADVCDKCGGELYQRSDD) are LID. Arg-127 provides a ligand contact to ATP. Zn(2+) contacts are provided by Cys-130 and Cys-133. 136 to 137 (TY) is a binding site for ATP. Zn(2+)-binding residues include Cys-150 and Cys-153. Residues Arg-160 and Arg-171 each contribute to the AMP site. Gln-199 contributes to the ATP binding site.

It belongs to the adenylate kinase family. Monomer.

The protein resides in the cytoplasm. It carries out the reaction AMP + ATP = 2 ADP. Its pathway is purine metabolism; AMP biosynthesis via salvage pathway; AMP from ADP: step 1/1. Functionally, catalyzes the reversible transfer of the terminal phosphate group between ATP and AMP. Plays an important role in cellular energy homeostasis and in adenine nucleotide metabolism. The sequence is that of Adenylate kinase from Bacillus cereus (strain G9842).